The sequence spans 432 residues: 3-phosphoshikimate 1-carboxyvinyltransferase (432 aa).

The 3-phosphoshikimate site is built by K22, S23, and R27. Residue K22 participates in phosphoenolpyruvate binding. G96 and R127 together coordinate phosphoenolpyruvate. The 3-phosphoshikimate site is built by S173, S174, Q175, S201, D316, N339, and K343. A phosphoenolpyruvate-binding site is contributed by Q175. The Proton acceptor role is filled by D316. R347, R391, and K416 together coordinate phosphoenolpyruvate.

It belongs to the EPSP synthase family. As to quaternary structure, monomer.

It localises to the cytoplasm. It carries out the reaction 3-phosphoshikimate + phosphoenolpyruvate = 5-O-(1-carboxyvinyl)-3-phosphoshikimate + phosphate. Its pathway is metabolic intermediate biosynthesis; chorismate biosynthesis; chorismate from D-erythrose 4-phosphate and phosphoenolpyruvate: step 6/7. Functionally, catalyzes the transfer of the enolpyruvyl moiety of phosphoenolpyruvate (PEP) to the 5-hydroxyl of shikimate-3-phosphate (S3P) to produce enolpyruvyl shikimate-3-phosphate and inorganic phosphate. This chain is 3-phosphoshikimate 1-carboxyvinyltransferase, found in Histophilus somni (Haemophilus somnus).